Here is a 156-residue protein sequence, read N- to C-terminus: Small ribosomal subunit protein uS7 (156 aa).

This sequence belongs to the universal ribosomal protein uS7 family. In terms of assembly, part of the 30S ribosomal subunit. Contacts proteins S9 and S11.

In terms of biological role, one of the primary rRNA binding proteins, it binds directly to 16S rRNA where it nucleates assembly of the head domain of the 30S subunit. Is located at the subunit interface close to the decoding center, probably blocks exit of the E-site tRNA. This Janthinobacterium sp. (strain Marseille) (Minibacterium massiliensis) protein is Small ribosomal subunit protein uS7.